Consider the following 378-residue polypeptide: uncharacterized protein (378 aa).

6 residues coordinate Zn(2+): cysteine 38, histidine 60, cysteine 90, cysteine 93, cysteine 96, and cysteine 104.

The protein belongs to the zinc-containing alcohol dehydrogenase family. Class-III subfamily. Requires Zn(2+) as cofactor.

This is an uncharacterized protein from Bacillus subtilis (strain 168).